Here is a 416-residue protein sequence, read N- to C-terminus: Formyl-CoA:oxalate CoA-transferase (416 aa).

Residues 17–18 (QS), Arg38, 72–75 (LNTK), 96–98 (NFH), His104, and 137–140 (KAYE) each bind CoA. The active-site Nucleophile is Asp169. Position 248-250 (248-250 (GGQ)) interacts with substrate. 273-275 (QEQ) serves as a coordination point for CoA.

This sequence belongs to the CoA-transferase III family. Frc subfamily. In terms of assembly, homodimer.

The catalysed reaction is formyl-CoA + oxalate = oxalyl-CoA + formate. Its pathway is metabolic intermediate degradation; oxalate degradation; CO(2) and formate from oxalate: step 1/2. In terms of biological role, involved in the catabolism of oxalate and in the adapatation to low pH via the induction of the oxalate-dependent acid tolerance response (ATR). Catalyzes the transfer of the CoA moiety from formyl-CoA to oxalate. This Escherichia coli O81 (strain ED1a) protein is Formyl-CoA:oxalate CoA-transferase.